An 86-amino-acid polypeptide reads, in one-letter code: Apolipoprotein C-I (86 aa).

The signal sequence occupies residues 1-26 (MRLFLSLPVLVVALLTILEGPGPAQG).

This sequence belongs to the apolipoprotein C1 family.

The protein resides in the secreted. Functionally, inhibitor of lipoprotein binding to the low density lipoprotein (LDL) receptor, LDL receptor-related protein, and very low density lipoprotein (VLDL) receptor. Associates with high density lipoproteins (HDL) and the triacylglycerol-rich lipoproteins in the plasma and makes up about 10% of the protein of the VLDL and 2% of that of HDL. Appears to interfere directly with fatty acid uptake and is also the major plasma inhibitor of cholesteryl ester transfer protein (CETP). Binds free fatty acids and reduces their intracellular esterification. Modulates the interaction of APOE with beta-migrating VLDL and inhibits binding of beta-VLDL to the LDL receptor-related protein. This chain is Apolipoprotein C-I (APOC1), found in Plecturocebus moloch (Dusky titi monkey).